We begin with the raw amino-acid sequence, 331 residues long: Ketol-acid reductoisomerase (NADP(+)) (331 aa).

The KARI N-terminal Rossmann domain maps to 1 to 182 (MATLYYDTDA…GGTRAGILET (182 aa)). Residues 25 to 28 (YGSQ), S51, S53, and 83 to 86 (DEFQ) each bind NADP(+). H108 is a catalytic residue. G134 serves as a coordination point for NADP(+). A KARI C-terminal knotted domain is found at 183–328 (NFKEETETDL…KGLRAMFSWL (146 aa)). Mg(2+) is bound by residues D191, E195, E227, and E231. Position 252 (S252) interacts with substrate.

Belongs to the ketol-acid reductoisomerase family. The cofactor is Mg(2+).

The enzyme catalyses (2R)-2,3-dihydroxy-3-methylbutanoate + NADP(+) = (2S)-2-acetolactate + NADPH + H(+). It carries out the reaction (2R,3R)-2,3-dihydroxy-3-methylpentanoate + NADP(+) = (S)-2-ethyl-2-hydroxy-3-oxobutanoate + NADPH + H(+). It participates in amino-acid biosynthesis; L-isoleucine biosynthesis; L-isoleucine from 2-oxobutanoate: step 2/4. Its pathway is amino-acid biosynthesis; L-valine biosynthesis; L-valine from pyruvate: step 2/4. In terms of biological role, involved in the biosynthesis of branched-chain amino acids (BCAA). Catalyzes an alkyl-migration followed by a ketol-acid reduction of (S)-2-acetolactate (S2AL) to yield (R)-2,3-dihydroxy-isovalerate. In the isomerase reaction, S2AL is rearranged via a Mg-dependent methyl migration to produce 3-hydroxy-3-methyl-2-ketobutyrate (HMKB). In the reductase reaction, this 2-ketoacid undergoes a metal-dependent reduction by NADPH to yield (R)-2,3-dihydroxy-isovalerate. The chain is Ketol-acid reductoisomerase (NADP(+)) from Synechococcus sp. (strain RCC307).